An 87-amino-acid chain; its full sequence is Cytochrome c5 (87 aa).

4 residues coordinate heme: C19, C22, H23, and M63. The cysteines at positions 69 and 72 are disulfide-linked.

This sequence belongs to the cytochrome c family. In terms of assembly, homodimer. In terms of processing, binds 1 heme group per subunit.

In terms of biological role, it is unreactive with cytochrome c reductase or oxidase but seems to function as an intermediate in nitrate respiration of facultative anaerobic pseudmonads. In Ectopseudomonas mendocina (Pseudomonas mendocina), this protein is Cytochrome c5.